A 323-amino-acid polypeptide reads, in one-letter code: Phosphatidylethanolamine:ceramide ethanolaminephosphotransferase (323 aa).

Residues 1-26 lie on the Cytoplasmic side of the membrane; that stretch reads MAVPPVEMYSGSFWNRMRKPLPLRTQ. Residues 27–47 traverse the membrane as a helical segment; the sequence is VIRFTVVFVIVSFILAVALQI. Residues 48–73 lie on the Extracellular side of the membrane; the sequence is THERMPDPKVTKPLPDLGFEVLHKYP. Residues 74–94 traverse the membrane as a helical segment; the sequence is FLFSVADCCIGFLNILSVFTA. Residues 95–147 lie on the Cytoplasmic side of the membrane; sequence FKLYLLHRHCVGSGEPELPCNIPGVSRFFLSVWLCKENCRIELRNVHTIAWIR. The helical transmembrane segment at 148-168 threads the bilayer; that stretch reads FITSYALLLLSRSVIMVVTSL. Over 169–211 the chain is Extracellular; sequence PNPDDLCQDPPKIENRVKDVILTVLTAGAGSIHCGDLMYSGHT. The active site involves His210. A helical transmembrane segment spans residues 212–232; it reads VILTLHLMFHWIYGAMVHWSF. A topological domain (cytoplasmic) is located at residue Arg233. A helical transmembrane segment spans residues 234–254; sequence PVVTVVAIFGYYCIVASRFHY. Catalysis depends on residues His253 and Asp257. The Extracellular portion of the chain corresponds to 255 to 257; it reads TDD. The helical transmembrane segment at 258-278 threads the bilayer; the sequence is VLVAIYLTIATFIAVGHNADG. Topologically, residues 279–323 are cytoplasmic; sequence APWQLQLFIRWLPCCGANSREVTEDGVPVAIVIKNEEMMNFEGKS.

It belongs to the sphingomyelin synthase family.

It is found in the membrane. Functionally, bidirectional lipid ethanolaminephosphotransferase capable of converting phosphatidylethanolamine (PE) and ceramide to ethanolamine-phosphorylceramide (EPC) and diacylglycerol (DAG) and vice versa. Direction is dependent on the relative concentrations of DAG and ceramide as phosphoethanolamine acceptors. Does not function strictly as a SM synthase. Essential for viability of the pathogenic bloodstream stage of this human protozoan parasite and, consequently, can be considered as potential drug target. This chain is Phosphatidylethanolamine:ceramide ethanolaminephosphotransferase, found in Trypanosoma brucei brucei (strain 927/4 GUTat10.1).